The primary structure comprises 822 residues: Epidermal growth factor receptor kinase substrate 8 (822 aa).

Polar residues-rich tracts occupy residues 1–10 (MNGHISNHPS) and 17–30 (SQMN…TFSQ). Residues 1–39 (MNGHISNHPSSFGMYPSQMNGYGSSPTFSQTDREHGSKT) form a disordered region. Serine 58 carries the post-translational modification Phosphoserine. The region spanning 64 to 194 (QYRVEHLTTF…SDSKGGKQKR (131 aa)) is the PTB domain. Disordered regions lie at residues 202-225 (ISNA…GTVT) and 298-320 (SKRK…TLRA). Over residues 208-221 (SIPPPPRAPAPAPP) the composition is skewed to pro residues. A Phosphothreonine modification is found at threonine 223. The span at 299–309 (KRKKNKKGKRK) shows a compositional bias: basic residues. The residue at position 317 (threonine 317) is a Phosphothreonine. At serine 476 the chain carries Phosphoserine. One can recognise an SH3 domain in the interval 531–590 (QPKKYAKSKYDFVARNNSELSVLKDDILEILDDRKQWWKVRNASGDSGFVPNNILDIVRP). The segment at 612–689 (EYGPRPADTP…VDRRKSQMEE (78 aa)) is disordered. Residues 618–645 (ADTPPAPSPPPTPAPVPVPLPPSTPAPV) are compositionally biased toward pro residues. Serine 625 carries the post-translational modification Phosphoserine. The residue at position 629 (threonine 629) is a Phosphothreonine; by MAPK. The effector region stretch occupies residues 649 to 822 (KVPANITRQN…VESFDEGSSH (174 aa)). A phosphoserine mark is found at serine 659, serine 662, and serine 685. The span at 671–687 (DSQRHKQLPVDRRKSQM) shows a compositional bias: basic and acidic residues. The interval 680 to 698 (VDRRKSQMEEVQDELIHRL) is amphipathic helix. 4 helix bundle regions span residues 718 to 738 (VINI…QSKG), 752 to 757 (GAQLFS), 762 to 767 (ELRTVC), and 766 to 785 (VCPE…AALE). Residues 787–822 (SSGSSELQEIMRRRQEKISAAASDSGVESFDEGSSH) are disordered. 2 positions are modified to phosphoserine: serine 811 and serine 815.

It belongs to the EPS8 family. In terms of assembly, homodimer. Part of a complex consisting of ABI1, EPS8 and SOS1. Interacts with MYO15A and WHRN. Interacts with LANCL1. Interacts with EGFR; mediates EPS8 phosphorylation. Interacts with BAIAP2. Interacts with SHB. Ubiquitinated by the SCF(FBXW5) E3 ubiquitin-protein ligase complex during G2 phase, leading to its transient degradation and subsequent cell shape changes required to allow mitotic progression. Reappears at the midzone of dividing cells. In terms of processing, phosphorylation at Ser-625 and Thr-629 by MAPK following BDNF treatment promotes removal from actin and filopodia formation. Phosphorylated by several receptor tyrosine kinases. Expressed in all tissues analyzed, including heart, brain, placenta, lung, liver, skeletal muscle, kidney and pancreas. Expressed in all epithelial and fibroblastic lines examined and in some, but not all, hematopoietic cells.

Its subcellular location is the cytoplasm. It is found in the cell cortex. The protein localises to the cell projection. The protein resides in the ruffle membrane. It localises to the growth cone. Its subcellular location is the stereocilium. It is found in the synapse. The protein localises to the synaptosome. Signaling adapter that controls various cellular protrusions by regulating actin cytoskeleton dynamics and architecture. Depending on its association with other signal transducers, can regulate different processes. Together with SOS1 and ABI1, forms a trimeric complex that participates in transduction of signals from Ras to Rac by activating the Rac-specific guanine nucleotide exchange factor (GEF) activity. Acts as a direct regulator of actin dynamics by binding actin filaments and has both barbed-end actin filament capping and actin bundling activities depending on the context. Displays barbed-end actin capping activity when associated with ABI1, thereby regulating actin-based motility process: capping activity is auto-inhibited and inhibition is relieved upon ABI1 interaction. Also shows actin bundling activity when associated with BAIAP2, enhancing BAIAP2-dependent membrane extensions and promoting filopodial protrusions. Involved in the regulation of processes such as axonal filopodia growth, stereocilia length, dendritic cell migration and cancer cell migration and invasion. Acts as a regulator of axonal filopodia formation in neurons: in the absence of neurotrophic factors, negatively regulates axonal filopodia formation via actin-capping activity. In contrast, it is phosphorylated in the presence of BDNF leading to inhibition of its actin-capping activity and stimulation of filopodia formation. Component of a complex with WHRN and MYO15A that localizes at stereocilia tips and is required for elongation of the stereocilia actin core. Indirectly involved in cell cycle progression; its degradation following ubiquitination being required during G2 phase to promote cell shape changes. The chain is Epidermal growth factor receptor kinase substrate 8 (EPS8) from Homo sapiens (Human).